The following is a 120-amino-acid chain: Small ribosomal subunit protein uS11 (120 aa).

This sequence belongs to the universal ribosomal protein uS11 family. As to quaternary structure, part of the 30S ribosomal subunit. Interacts with proteins S7 and S18. Binds to IF-3.

Its function is as follows. Located on the platform of the 30S subunit, it bridges several disparate RNA helices of the 16S rRNA. Forms part of the Shine-Dalgarno cleft in the 70S ribosome. The polypeptide is Small ribosomal subunit protein uS11 (Neorickettsia sennetsu (strain ATCC VR-367 / Miyayama) (Ehrlichia sennetsu)).